The following is a 264-amino-acid chain: Transmembrane protein 41A (264 aa).

Positions 1–17 are cleaved as a signal peptide; sequence MRPLLGLLLVFAGCTFA. The next 5 membrane-spanning stretches (helical) occupy residues 67–87, 100–122, 153–173, 175–195, and 219–239; these read AYVFLLFCGAYLYKQGFAIPG, GPWLGLLLCCVLTSVGATCCYLL, LFFFLLFLRLFPMTPNWFLNL, APILNIPIVQFFFSVLIGLIP, and WDTVFKLLAIAMVALIPGTLI. The tract at residues 96 to 207 is VTT domain; the sequence is GALFGPWLGL…FICVQTGSIL (112 aa). An N-linked (GlcNAc...) asparagine glycan is attached at asparagine 250.

The protein belongs to the TMEM41 family.

Its subcellular location is the membrane. The chain is Transmembrane protein 41A (TMEM41A) from Homo sapiens (Human).